The primary structure comprises 159 residues: Ribonuclease H (159 aa).

An RNase H type-1 domain is found at 1–142 (MHKQVEIFTD…CDELAKAAAQ (142 aa)). Residues aspartate 10, glutamate 48, aspartate 70, and aspartate 134 each contribute to the Mg(2+) site. Residues 135–159 (ELAKAAAQSPTKEDTGYLESQQDKT) are disordered. The segment covering 145–159 (TKEDTGYLESQQDKT) has biased composition (basic and acidic residues).

It belongs to the RNase H family. In terms of assembly, monomer. Mg(2+) is required as a cofactor.

It is found in the cytoplasm. The catalysed reaction is Endonucleolytic cleavage to 5'-phosphomonoester.. Functionally, endonuclease that specifically degrades the RNA of RNA-DNA hybrids. In Proteus mirabilis (strain HI4320), this protein is Ribonuclease H.